The sequence spans 240 residues: GATA transcription factor 4 (240 aa).

A disordered region spans residues 104–124 (ISFTGKPRSRRSRAPAPSVAG). Positions 109-116 (KPRSRRSR) match the Nuclear localization signal motif. The GATA-type zinc-finger motif lies at 154 to 208 (ADGARRCTHCASEKTPQWRTGPLGPKTLCNACGVRYKSGRLVPEYRPASSPTFVL).

The protein belongs to the type IV zinc-finger family. Class A subfamily. In terms of tissue distribution, expressed in roots, flowers and leaves, and to a lower extent in stems.

Its subcellular location is the nucleus. Transcriptional activator that specifically binds 5'-GATA-3' or 5'-GAT-3' motifs within gene promoters. May be involved in the regulation of some light-responsive genes. The polypeptide is GATA transcription factor 4 (GATA4) (Arabidopsis thaliana (Mouse-ear cress)).